The sequence spans 137 residues: MSLTVRVIAPDRTVWDAPAQEVILPSTTGQLGILPGHAPLLSALDTGVLRVRADKEWLAIAVLGGFAEVENNEVTVLVNAAERGDKIDLEEARAAFSQADERLKGVKEDDRQGKFQATQAYRRARARLQAAGGLVSV.

It belongs to the ATPase epsilon chain family. In terms of assembly, F-type ATPases have 2 components, CF(1) - the catalytic core - and CF(0) - the membrane proton channel. CF(1) has five subunits: alpha(3), beta(3), gamma(1), delta(1), epsilon(1). CF(0) has three main subunits: a, b and c.

The protein resides in the cellular thylakoid membrane. Functionally, produces ATP from ADP in the presence of a proton gradient across the membrane. In Synechococcus elongatus (strain ATCC 33912 / PCC 7942 / FACHB-805) (Anacystis nidulans R2), this protein is ATP synthase epsilon chain (atpC).